The sequence spans 331 residues: Anthranilate phosphoribosyltransferase (331 aa).

5-phospho-alpha-D-ribose 1-diphosphate-binding positions include G78, 81 to 82 (GD), S86, 88 to 91 (NIST), 106 to 114 (KHGNKSITS), and S118. Residue G78 coordinates anthranilate. Residue S90 participates in Mg(2+) binding. N109 contributes to the anthranilate binding site. An anthranilate-binding site is contributed by R163. Mg(2+) is bound by residues D222 and E223.

This sequence belongs to the anthranilate phosphoribosyltransferase family. As to quaternary structure, homodimer. It depends on Mg(2+) as a cofactor.

It catalyses the reaction N-(5-phospho-beta-D-ribosyl)anthranilate + diphosphate = 5-phospho-alpha-D-ribose 1-diphosphate + anthranilate. Its pathway is amino-acid biosynthesis; L-tryptophan biosynthesis; L-tryptophan from chorismate: step 2/5. Its function is as follows. Catalyzes the transfer of the phosphoribosyl group of 5-phosphorylribose-1-pyrophosphate (PRPP) to anthranilate to yield N-(5'-phosphoribosyl)-anthranilate (PRA). This is Anthranilate phosphoribosyltransferase from Staphylococcus epidermidis (strain ATCC 35984 / DSM 28319 / BCRC 17069 / CCUG 31568 / BM 3577 / RP62A).